The sequence spans 110 residues: UPF0122 protein SERP0802 (110 aa).

It belongs to the UPF0122 family.

Its function is as follows. Might take part in the signal recognition particle (SRP) pathway. This is inferred from the conservation of its genetic proximity to ftsY/ffh. May be a regulatory protein. This Staphylococcus epidermidis (strain ATCC 35984 / DSM 28319 / BCRC 17069 / CCUG 31568 / BM 3577 / RP62A) protein is UPF0122 protein SERP0802.